Here is a 425-residue protein sequence, read N- to C-terminus: Serine--tRNA ligase (425 aa).

An L-serine-binding site is contributed by 233–235; sequence TAE. 264 to 266 provides a ligand contact to ATP; sequence RAE. Glu-287 lines the L-serine pocket. Residue 351–354 participates in ATP binding; the sequence is EISS. Ser-387 lines the L-serine pocket.

The protein belongs to the class-II aminoacyl-tRNA synthetase family. Type-1 seryl-tRNA synthetase subfamily. As to quaternary structure, homodimer. The tRNA molecule binds across the dimer.

The protein localises to the cytoplasm. It catalyses the reaction tRNA(Ser) + L-serine + ATP = L-seryl-tRNA(Ser) + AMP + diphosphate + H(+). The enzyme catalyses tRNA(Sec) + L-serine + ATP = L-seryl-tRNA(Sec) + AMP + diphosphate + H(+). Its pathway is aminoacyl-tRNA biosynthesis; selenocysteinyl-tRNA(Sec) biosynthesis; L-seryl-tRNA(Sec) from L-serine and tRNA(Sec): step 1/1. Functionally, catalyzes the attachment of serine to tRNA(Ser). Is also able to aminoacylate tRNA(Sec) with serine, to form the misacylated tRNA L-seryl-tRNA(Sec), which will be further converted into selenocysteinyl-tRNA(Sec). The sequence is that of Serine--tRNA ligase from Clostridium perfringens (strain SM101 / Type A).